The chain runs to 358 residues: Phosphoribosylformylglycinamidine cyclo-ligase (358 aa).

This sequence belongs to the AIR synthase family.

It localises to the cytoplasm. The catalysed reaction is 2-formamido-N(1)-(5-O-phospho-beta-D-ribosyl)acetamidine + ATP = 5-amino-1-(5-phospho-beta-D-ribosyl)imidazole + ADP + phosphate + H(+). Its pathway is purine metabolism; IMP biosynthesis via de novo pathway; 5-amino-1-(5-phospho-D-ribosyl)imidazole from N(2)-formyl-N(1)-(5-phospho-D-ribosyl)glycinamide: step 2/2. This chain is Phosphoribosylformylglycinamidine cyclo-ligase, found in Chromohalobacter salexigens (strain ATCC BAA-138 / DSM 3043 / CIP 106854 / NCIMB 13768 / 1H11).